Reading from the N-terminus, the 118-residue chain is Large ribosomal subunit protein bL20 (118 aa).

It belongs to the bacterial ribosomal protein bL20 family.

Functionally, binds directly to 23S ribosomal RNA and is necessary for the in vitro assembly process of the 50S ribosomal subunit. It is not involved in the protein synthesizing functions of that subunit. The chain is Large ribosomal subunit protein bL20 (rplT) from Aquifex aeolicus (strain VF5).